Here is an 876-residue protein sequence, read N- to C-terminus: Alanine--tRNA ligase (876 aa).

At Lys-74 the chain carries N6-acetyllysine. His-564, His-568, Cys-666, and His-670 together coordinate Zn(2+).

The protein belongs to the class-II aminoacyl-tRNA synthetase family. As to quaternary structure, homotetramer. The cofactor is Zn(2+).

The protein localises to the cytoplasm. The enzyme catalyses tRNA(Ala) + L-alanine + ATP = L-alanyl-tRNA(Ala) + AMP + diphosphate. Functionally, catalyzes the attachment of alanine to tRNA(Ala) in a two-step reaction: alanine is first activated by ATP to form Ala-AMP and then transferred to the acceptor end of tRNA(Ala). Also edits incorrectly charged Ser-tRNA(Ala) and Gly-tRNA(Ala) via its editing domain. In Shigella boydii serotype 18 (strain CDC 3083-94 / BS512), this protein is Alanine--tRNA ligase.